Here is a 212-residue protein sequence, read N- to C-terminus: MDYLLMIFSLLFVACQGAPETAVLGAELSAVGENGGEKPTPSPPWRLRRSKRCSCSSLMDKECVYFCHLDIIWVNTPEHVVPYGLGSPRSKRALENLLPTKATDRENRCQCASQKDKKCWNFCQAGKELRAEDIMEKDWNNHKKGKDCSKLGKKCIYQQLVRGRKIRRSSEEHLRQTRSETMRNSVKSSFHDPKLKGKPSRERYVTHNRAHW.

An N-terminal signal peptide occupies residues 1-17 (MDYLLMIFSLLFVACQG). The propeptide occupies 18–50 (APETAVLGAELSAVGENGGEKPTPSPPWRLRRS). 2 disulfides stabilise this stretch: C53-C67 and C55-C63. The propeptide occupies 74–212 (VNTPEHVVPY…RYVTHNRAHW (139 aa)). The tract at residues 109-123 (CQCASQKDKKCWNFC) is endothelin-like. Basic and acidic residues-rich tracts occupy residues 168 to 181 (RSSE…RSET) and 189 to 205 (SFHD…ERYV). Residues 168-212 (RSSEEHLRQTRSETMRNSVKSSFHDPKLKGKPSRERYVTHNRAHW) are disordered.

Belongs to the endothelin/sarafotoxin family. Expressed in lung, placental stem villi vessels and in cultured placental vascular smooth muscle cells.

It localises to the secreted. In terms of biological role, endothelins are endothelium-derived vasoconstrictor peptides. Probable ligand for G-protein coupled receptors EDNRA and EDNRB which activates PTK2B, BCAR1, BCAR3 and, GTPases RAP1 and RHOA cascade in glomerular mesangial cells. Also binds the DEAR/FBXW7-AS1 receptor. Promotes mesenteric arterial wall remodeling via activation of ROCK signaling and subsequent colocalization of NFATC3 with F-actin filaments. NFATC3 then translocates to the nucleus where it subsequently promotes the transcription of the smooth muscle hypertrophy and differentiation marker ACTA2. This Homo sapiens (Human) protein is Endothelin-1 (EDN1).